The chain runs to 214 residues: Probable transaldolase (214 aa).

Catalysis depends on Lys-83, which acts as the Schiff-base intermediate with substrate.

It belongs to the transaldolase family. Type 3B subfamily.

It is found in the cytoplasm. It carries out the reaction D-sedoheptulose 7-phosphate + D-glyceraldehyde 3-phosphate = D-erythrose 4-phosphate + beta-D-fructose 6-phosphate. It functions in the pathway carbohydrate degradation; pentose phosphate pathway; D-glyceraldehyde 3-phosphate and beta-D-fructose 6-phosphate from D-ribose 5-phosphate and D-xylulose 5-phosphate (non-oxidative stage): step 2/3. Functionally, transaldolase is important for the balance of metabolites in the pentose-phosphate pathway. This Brevibacillus brevis (strain 47 / JCM 6285 / NBRC 100599) protein is Probable transaldolase.